The sequence spans 229 residues: Large ribosomal subunit protein uL1 (229 aa).

In terms of assembly, part of the 50S ribosomal subunit.

Directly binds to 23S rRNA. Forms what is known as the L1 stalk, which protrudes beyond the 70S ribosome surface. The stalk is preferentially stabilized in 70S versus 50S crystals. Interacts with the E site tRNA, blocking the exit path. This blockage implies that this section of the ribosome must be able to move to release the deacetylated tRNA. In terms of biological role, protein L1 is also a translational repressor protein, it controls the translation of the L11 operon by binding to its mRNA. The polypeptide is Large ribosomal subunit protein uL1 (rplA) (Thermus thermophilus (strain ATCC 27634 / DSM 579 / HB8)).